A 274-amino-acid polypeptide reads, in one-letter code: Thiazole synthase (274 aa).

The active-site Schiff-base intermediate with DXP is the Lys115. Residues Gly176, 202–203 (AG), and 224–225 (NS) each bind 1-deoxy-D-xylulose 5-phosphate.

Belongs to the ThiG family. Homotetramer. Forms heterodimers with either ThiH or ThiS.

The protein localises to the cytoplasm. The catalysed reaction is [ThiS sulfur-carrier protein]-C-terminal-Gly-aminoethanethioate + 2-iminoacetate + 1-deoxy-D-xylulose 5-phosphate = [ThiS sulfur-carrier protein]-C-terminal Gly-Gly + 2-[(2R,5Z)-2-carboxy-4-methylthiazol-5(2H)-ylidene]ethyl phosphate + 2 H2O + H(+). It participates in cofactor biosynthesis; thiamine diphosphate biosynthesis. Functionally, catalyzes the rearrangement of 1-deoxy-D-xylulose 5-phosphate (DXP) to produce the thiazole phosphate moiety of thiamine. Sulfur is provided by the thiocarboxylate moiety of the carrier protein ThiS. In vitro, sulfur can be provided by H(2)S. The chain is Thiazole synthase from Parasynechococcus marenigrum (strain WH8102).